Here is a 261-residue protein sequence, read N- to C-terminus: Proteasome subunit alpha (261 aa).

The disordered stretch occupies residues 242–261; the sequence is NEENKKEEENREETKEKQEE.

The protein belongs to the peptidase T1A family. As to quaternary structure, the 20S proteasome core is composed of 14 alpha and 14 beta subunits that assemble into four stacked heptameric rings, resulting in a barrel-shaped structure. The two inner rings, each composed of seven catalytic beta subunits, are sandwiched by two outer rings, each composed of seven alpha subunits. The catalytic chamber with the active sites is on the inside of the barrel. Has a gated structure, the ends of the cylinder being occluded by the N-termini of the alpha-subunits. Is capped at one or both ends by the proteasome regulatory ATPase, PAN.

The protein localises to the cytoplasm. The formation of the proteasomal ATPase PAN-20S proteasome complex, via the docking of the C-termini of PAN into the intersubunit pockets in the alpha-rings, triggers opening of the gate for substrate entry. Interconversion between the open-gate and close-gate conformations leads to a dynamic regulation of the 20S proteasome proteolysis activity. Functionally, component of the proteasome core, a large protease complex with broad specificity involved in protein degradation. The M.jannaschii proteasome is able to cleave oligopeptides after Glu, Asp, Tyr, Phe, Trp, slightly after Arg, but not after Ala. Thus, displays caspase-like and chymotrypsin-like activities and low level of trypsin-like activity. This is Proteasome subunit alpha from Methanocaldococcus jannaschii (strain ATCC 43067 / DSM 2661 / JAL-1 / JCM 10045 / NBRC 100440) (Methanococcus jannaschii).